We begin with the raw amino-acid sequence, 211 residues long: ATP phosphoribosyltransferase (211 aa).

It belongs to the ATP phosphoribosyltransferase family. Short subfamily. In terms of assembly, heteromultimer composed of HisG and HisZ subunits.

It localises to the cytoplasm. It catalyses the reaction 1-(5-phospho-beta-D-ribosyl)-ATP + diphosphate = 5-phospho-alpha-D-ribose 1-diphosphate + ATP. The protein operates within amino-acid biosynthesis; L-histidine biosynthesis; L-histidine from 5-phospho-alpha-D-ribose 1-diphosphate: step 1/9. Its function is as follows. Catalyzes the condensation of ATP and 5-phosphoribose 1-diphosphate to form N'-(5'-phosphoribosyl)-ATP (PR-ATP). Has a crucial role in the pathway because the rate of histidine biosynthesis seems to be controlled primarily by regulation of HisG enzymatic activity. The polypeptide is ATP phosphoribosyltransferase (Pseudomonas putida (strain W619)).